We begin with the raw amino-acid sequence, 86 residues long: U15-lycotoxin-Ls1d (86 aa).

An N-terminal signal peptide occupies residues 1–20 (MNSKIFAVLFLLAFLSCVLS). The WAP domain maps to 21 to 66 (DQYCPKSSITACKKMNIRNDCCKDDDCTGGSWCCATPCGNFCKYPT). 5 disulfides stabilise this stretch: Cys-24-Cys-54, Cys-32-Cys-58, Cys-41-Cys-53, Cys-42-Cys-80, and Cys-47-Cys-62.

This sequence belongs to the venom protein 11 family. 01 (wap-1) subfamily. In terms of processing, contains 5 disulfide bonds. Expressed by the venom gland.

It is found in the secreted. In terms of biological role, has antibacterial activity. This Lycosa singoriensis (Wolf spider) protein is U15-lycotoxin-Ls1d.